A 165-amino-acid polypeptide reads, in one-letter code: uncharacterized protein (165 aa).

Residues 10 to 27 form a helical membrane-spanning segment; sequence VSLTIVFVLFFSADVSLT.

The protein localises to the membrane. This is an uncharacterized protein from Saccharomyces cerevisiae (strain ATCC 204508 / S288c) (Baker's yeast).